The sequence spans 350 residues: Kelch domain-containing protein 9 (350 aa).

Kelch repeat units lie at residues Arg-39–Gly-89, Trp-91–Cys-137, and Gln-325–Ile-350.

Interacts with CCNA1.

This chain is Kelch domain-containing protein 9 (Klhdc9), found in Mus musculus (Mouse).